We begin with the raw amino-acid sequence, 297 residues long: Pyridoxal 5'-phosphate synthase subunit PdxS (297 aa).

Residue D27 coordinates D-ribose 5-phosphate. Residue K84 is the Schiff-base intermediate with D-ribose 5-phosphate of the active site. A D-ribose 5-phosphate-binding site is contributed by G156. R168 contacts D-glyceraldehyde 3-phosphate. D-ribose 5-phosphate is bound by residues G217 and 238–239 (GS).

The protein belongs to the PdxS/SNZ family. As to quaternary structure, in the presence of PdxT, forms a dodecamer of heterodimers.

It carries out the reaction aldehydo-D-ribose 5-phosphate + D-glyceraldehyde 3-phosphate + L-glutamine = pyridoxal 5'-phosphate + L-glutamate + phosphate + 3 H2O + H(+). The protein operates within cofactor biosynthesis; pyridoxal 5'-phosphate biosynthesis. In terms of biological role, catalyzes the formation of pyridoxal 5'-phosphate from ribose 5-phosphate (RBP), glyceraldehyde 3-phosphate (G3P) and ammonia. The ammonia is provided by the PdxT subunit. Can also use ribulose 5-phosphate and dihydroxyacetone phosphate as substrates, resulting from enzyme-catalyzed isomerization of RBP and G3P, respectively. The protein is Pyridoxal 5'-phosphate synthase subunit PdxS of Corynebacterium efficiens (strain DSM 44549 / YS-314 / AJ 12310 / JCM 11189 / NBRC 100395).